The chain runs to 125 residues: Apolipoprotein C-IV (125 aa).

An N-terminal signal peptide occupies residues 1 to 27 (MSLLRQRLQALPVLCLCVLVLACIGAC).

This sequence belongs to the apolipoprotein C4 family.

It is found in the secreted. May participate in lipoprotein metabolism. The protein is Apolipoprotein C-IV (APOC4) of Plecturocebus moloch (Dusky titi monkey).